Consider the following 592-residue polypeptide: Glycosyltransferase 25 family member (592 aa).

Positions 1-13 are cleaved as a signal peptide; that stretch reads MLALLLTTTIVSG. 2 N-linked (GlcNAc...) asparagine glycosylation sites follow: Asn249 and Asn510. 2 stretches are compositionally biased toward basic and acidic residues: residues 552–563 and 579–592; these read RIQEPKKGDKEQ and GEHD…RSEL. The segment at 552-592 is disordered; sequence RIQEPKKGDKEQLPNAPALLSESGIGQGEHDLETKNRRSEL. Positions 589–592 match the Prevents secretion from ER motif; that stretch reads RSEL.

The protein belongs to the glycosyltransferase 25 family.

The protein localises to the endoplasmic reticulum lumen. This Anopheles gambiae (African malaria mosquito) protein is Glycosyltransferase 25 family member.